The sequence spans 311 residues: Ribonuclease Z (311 aa).

Positions 61, 63, 65, 66, 148, 216, and 275 each coordinate Zn(2+). The active-site Proton acceptor is the Asp-65.

It belongs to the RNase Z family. In terms of assembly, homodimer. It depends on Zn(2+) as a cofactor.

It carries out the reaction Endonucleolytic cleavage of RNA, removing extra 3' nucleotides from tRNA precursor, generating 3' termini of tRNAs. A 3'-hydroxy group is left at the tRNA terminus and a 5'-phosphoryl group is left at the trailer molecule.. Its function is as follows. Zinc phosphodiesterase, which displays some tRNA 3'-processing endonuclease activity. Probably involved in tRNA maturation, by removing a 3'-trailer from precursor tRNA. In Clostridium novyi (strain NT), this protein is Ribonuclease Z.